The sequence spans 204 residues: Putative AgrB-like protein (204 aa).

The next 4 helical transmembrane spans lie at 40–60, 87–107, 111–131, and 156–176; these read IILI…ATGL, LNCT…FQNI, NWIV…FAPA, and LILT…LIMV.

It belongs to the AgrB family.

The protein localises to the cell membrane. May be involved in the proteolytic processing of a quorum sensing system signal molecule precursor. The polypeptide is Putative AgrB-like protein (Listeria welshimeri serovar 6b (strain ATCC 35897 / DSM 20650 / CCUG 15529 / CIP 8149 / NCTC 11857 / SLCC 5334 / V8)).